We begin with the raw amino-acid sequence, 371 residues long: MFKRETKDFINIDPLQTGGKLTEEARQALLEWGDGYSVCDFCTTGRLDEIKTPPIHDFIHNQLPKFLGCDVARVTNGAREAKFAVMHSLAKKDAWVVMDENCHYSSYVAAERAGLNIALVPKTDYPDYAITPENFAQTIEETKKRGEVVLALITYPDGNYGNLPDVKKIAKVCSEYDVPLLVNGAYAIGRMPVSLKEIGADFIVGSGHKSMAASGPIGVMGMKEEWAEIVLRRSEKYKNKEVELLGCTARGATIITLMASFPHVRERIKRWDEEVEKARRFAAEMEKLGIKQLGDNPHNHDLMFFHAEVLYEISKKAKGGRFFLYRELKSRKIHGIKPGLTRYFKLSTYGLSDEEVDYVLNAFKEIIEKYS.

Residues 78 to 79 (AR), asparagine 183, and 206 to 208 (SGH) contribute to the pyridoxal 5'-phosphate site. Lysine 209 carries the post-translational modification N6-(pyridoxal phosphate)lysine.

This sequence belongs to the SepCysS family. In terms of assembly, homodimer. Probably interacts with SepRS. It depends on pyridoxal 5'-phosphate as a cofactor.

It carries out the reaction O-phospho-L-seryl-tRNA(Cys) + hydrogen sulfide + H(+) = L-cysteinyl-tRNA(Cys) + phosphate. Its function is as follows. Converts O-phospho-L-seryl-tRNA(Cys) (Sep-tRNA(Cys)) to L-cysteinyl-tRNA(Cys) (Cys-tRNA(Cys)). The chain is O-phospho-L-seryl-tRNA:Cys-tRNA synthase 1 from Archaeoglobus fulgidus (strain ATCC 49558 / DSM 4304 / JCM 9628 / NBRC 100126 / VC-16).